Reading from the N-terminus, the 374-residue chain is F-box/kelch-repeat protein At2g24250 (374 aa).

The F-box domain maps to 14–63 (PDWSQLPEELLHIISTHLEDHYFDAVHARSVCRSWRSTFPFPSSLLRQSY). Kelch repeat units lie at residues 100–150 (SEYF…PLGH) and 249–301 (NFLV…LGNF).

The polypeptide is F-box/kelch-repeat protein At2g24250 (Arabidopsis thaliana (Mouse-ear cress)).